The following is a 485-amino-acid chain: ATP-dependent 6-phosphofructokinase (485 aa).

Residues Gly-105, 171 to 172, and 196 to 199 each bind ATP; these read RG and GDGT. Asp-197 contributes to the Mg(2+) binding site. Substrate contacts are provided by residues 225–227, 270–272, Glu-323, and 378–381; these read TID, MGR, and YMIR. Asp-227 acts as the Proton acceptor in catalysis. The short motif at 483–485 is the Peroxisomal targeting signal element; sequence SKL.

The protein belongs to the phosphofructokinase type A (PFKA) family. PPi-dependent PFK group II subfamily. Atypical ATP-dependent clade 'X' sub-subfamily. Homotetramer. The cofactor is Mg(2+).

The protein localises to the glycosome. The enzyme catalyses beta-D-fructose 6-phosphate + ATP = beta-D-fructose 1,6-bisphosphate + ADP + H(+). It functions in the pathway carbohydrate degradation; glycolysis; D-glyceraldehyde 3-phosphate and glycerone phosphate from D-glucose: step 3/4. Allosterically activated by AMP. In terms of biological role, catalyzes the phosphorylation of D-fructose 6-phosphate to fructose 1,6-bisphosphate by ATP, the first committing step of glycolysis. The chain is ATP-dependent 6-phosphofructokinase from Trypanosoma cruzi (strain CL Brener).